The sequence spans 340 residues: Tetraacyldisaccharide 4'-kinase (340 aa).

50–57 (HGGGAGKT) is a binding site for ATP.

Belongs to the LpxK family.

The enzyme catalyses a lipid A disaccharide + ATP = a lipid IVA + ADP + H(+). It functions in the pathway glycolipid biosynthesis; lipid IV(A) biosynthesis; lipid IV(A) from (3R)-3-hydroxytetradecanoyl-[acyl-carrier-protein] and UDP-N-acetyl-alpha-D-glucosamine: step 6/6. In terms of biological role, transfers the gamma-phosphate of ATP to the 4'-position of a tetraacyldisaccharide 1-phosphate intermediate (termed DS-1-P) to form tetraacyldisaccharide 1,4'-bis-phosphate (lipid IVA). The protein is Tetraacyldisaccharide 4'-kinase of Rhodopseudomonas palustris (strain BisA53).